A 187-amino-acid chain; its full sequence is Large ribosomal subunit protein uL5 (187 aa).

This sequence belongs to the universal ribosomal protein uL5 family. In terms of assembly, part of the 50S ribosomal subunit; part of the 5S rRNA/L5/L18/L25 subcomplex. Contacts the 5S rRNA and the P site tRNA. Forms a bridge to the 30S subunit in the 70S ribosome.

In terms of biological role, this is one of the proteins that bind and probably mediate the attachment of the 5S RNA into the large ribosomal subunit, where it forms part of the central protuberance. In the 70S ribosome it contacts protein S13 of the 30S subunit (bridge B1b), connecting the 2 subunits; this bridge is implicated in subunit movement. Contacts the P site tRNA; the 5S rRNA and some of its associated proteins might help stabilize positioning of ribosome-bound tRNAs. The chain is Large ribosomal subunit protein uL5 from Dinoroseobacter shibae (strain DSM 16493 / NCIMB 14021 / DFL 12).